Consider the following 338-residue polypeptide: RNA 3'-terminal phosphate cyclase (338 aa).

Residues Gln-103 and 283–287 each bind ATP; that span reads YLADQ. His-308 serves as the catalytic Tele-AMP-histidine intermediate.

This sequence belongs to the RNA 3'-terminal cyclase family. Type 1 subfamily.

It is found in the cytoplasm. It carries out the reaction a 3'-end 3'-phospho-ribonucleotide-RNA + ATP = a 3'-end 2',3'-cyclophospho-ribonucleotide-RNA + AMP + diphosphate. Its function is as follows. Catalyzes the conversion of 3'-phosphate to a 2',3'-cyclic phosphodiester at the end of RNA. The mechanism of action of the enzyme occurs in 3 steps: (A) adenylation of the enzyme by ATP; (B) transfer of adenylate to an RNA-N3'P to produce RNA-N3'PP5'A; (C) and attack of the adjacent 2'-hydroxyl on the 3'-phosphorus in the diester linkage to produce the cyclic end product. The biological role of this enzyme is unknown but it is likely to function in some aspects of cellular RNA processing. In Escherichia coli O7:K1 (strain IAI39 / ExPEC), this protein is RNA 3'-terminal phosphate cyclase.